The following is a 45-amino-acid chain: Conotoxin reg3.12 (45 aa).

The propeptide occupies 1–31; sequence DQPVERHAGNKRHLNPTIRRAMIIDANRREK. 3 disulfides stabilise this stretch: Cys-32/Cys-44, Cys-33/Cys-42, and Cys-38/Cys-45.

The protein belongs to the conotoxin M superfamily. In terms of tissue distribution, expressed by the venom duct.

Its subcellular location is the secreted. The sequence is that of Conotoxin reg3.12 from Conus regius (Crown cone).